The primary structure comprises 185 residues: Ribosome-recycling factor (185 aa).

The segment at 135–159 (ANDEVKKLEKDKAITEDESKKGQDE) is disordered.

The protein belongs to the RRF family.

It localises to the cytoplasm. Functionally, responsible for the release of ribosomes from messenger RNA at the termination of protein biosynthesis. May increase the efficiency of translation by recycling ribosomes from one round of translation to another. The protein is Ribosome-recycling factor of Campylobacter curvus (strain 525.92).